The chain runs to 470 residues: Nuclear receptor subfamily 0 group B member 1 (470 aa).

Tandem repeats lie at residues 1–67 (MAGE…YRCC), 68–133 (FCGK…YRCC), and 134–200 (FCGE…YRCC). Residues 1–253 (MAGENHQWQG…RPVALKSPQV (253 aa)) are 4 X 67 AA tandem repeats. 3 consecutive short sequence motifs (LXXLL motif) follow at residues 13–17 (LYNML), 80–84 (LYSML), and 146–150 (LYSLL). The stretch at 201 to 253 (FCGEDHPQQGSTLYCVPTSTNQAQAAPEERPRAPWWDTSSGALRPVALKSPQV) is one 4; truncated repeat. An NR LBD domain is found at 205–469 (DHPQQGSTLY…DMMLEMLCTK (265 aa)). The AF-2 motif motif lies at 461–466 (MMLEML).

This sequence belongs to the nuclear hormone receptor family. NR0 subfamily. As to quaternary structure, homodimer. Interacts with NR5A1, NR5A2, NR0B2 and with COPS2. Interacts with ESRRB; represses ESRRB activity at the GATA6 promoter.

Its subcellular location is the nucleus. The protein resides in the cytoplasm. Its function is as follows. Nuclear receptor that lacks a DNA-binding domain and acts as a corepressor that inhibits the transcriptional activity of other nuclear receptors through heterodimeric interactions. Component of a cascade required for the development of the hypothalamic-pituitary-adrenal-gonadal axis. May also have a role in the development of the embryo and in the maintenance of embryonic stem cell pluripotency. This chain is Nuclear receptor subfamily 0 group B member 1 (NR0B1), found in Homo sapiens (Human).